Consider the following 189-residue polypeptide: ATP synthase subunit delta (189 aa).

The protein belongs to the ATPase delta chain family. In terms of assembly, F-type ATPases have 2 components, F(1) - the catalytic core - and F(0) - the membrane proton channel. F(1) has five subunits: alpha(3), beta(3), gamma(1), delta(1), epsilon(1). F(0) has three main subunits: a(1), b(2) and c(10-14). The alpha and beta chains form an alternating ring which encloses part of the gamma chain. F(1) is attached to F(0) by a central stalk formed by the gamma and epsilon chains, while a peripheral stalk is formed by the delta and b chains.

Its subcellular location is the cell inner membrane. Functionally, f(1)F(0) ATP synthase produces ATP from ADP in the presence of a proton or sodium gradient. F-type ATPases consist of two structural domains, F(1) containing the extramembraneous catalytic core and F(0) containing the membrane proton channel, linked together by a central stalk and a peripheral stalk. During catalysis, ATP synthesis in the catalytic domain of F(1) is coupled via a rotary mechanism of the central stalk subunits to proton translocation. This protein is part of the stalk that links CF(0) to CF(1). It either transmits conformational changes from CF(0) to CF(1) or is implicated in proton conduction. The protein is ATP synthase subunit delta of Methylorubrum populi (strain ATCC BAA-705 / NCIMB 13946 / BJ001) (Methylobacterium populi).